Consider the following 1265-residue polypeptide: MSENLFSKKKIFFNQTIGKKEVKNVIAWAFTSYGAARTAYLVEQLKDLGFHYATKAGISLSVEDLLIPPLKDSLLQTAENEIKATLNRYLLGEITEVERFQKVIDIWHRTSETLKDEVVDYFKSTDPLNSLYMMSFSGARGNLSQVHQLVGMRGLMADPQGEIIDFPIRSNFKEGLTTTEYLISSYGARKGVVDTALRTADSGYLTRRLVDIAQEVIIREIDCETPRGVILTALKENGKILISLKDRLVGRVLLHNLYHPKTHSLIAQKNESISVLLADDIIKAGLKEVWIRSPLTCKATRSVCQYCYGWNLAHGRLVELGEAVGIIAAQSIGEPGTQLTMRTFHTGGVFTAEVAKQITAPFPGRIYYPLNTTFREIRTRYGDNAWWVENNAKLRLEGENGKRVSFNLTQGSIIRIKDQSWVETNDLLAEIASTAPNTRRAKEKTTRELRTDIAGEVYFQNLEIDEAGGQVDTAGGSIWILGGNVYNLSSNFDVILKNGDFILNGSILARTQFISQYGGYVRLTDDNLTVEVIPASLKIQNAKIFIDETDQPCLHFKNNETFELKIQNETQLKHGQVVAERYLTTEMGGIIRYADLDAKTTNKNGYEITKSGSLLWIPEETHEVNTEAKNVLVKNGQYIPSGTQLIKNKKIRNKHSGVVELVHKKNFVIEIIIKPGIVLKIKNNVSFSKKAKRFIQPGEYLFSKFVVEDLRYLDYIITSTGIILLLRPVVEYKVESPKTIIRDDKNHLKISSIQSILYKDGERIKSVQGIELFKIQLKLQVRKGLKHLPIKTNFIPSSQNSFELEFLIIESILPKNDKYFDSTVLESLAKAQTKILVKNNQLVKKGELIAQIEIISINQGEIRWIGDNTAKQIRRLLLITEKQIVTIPIQNLTKLKNKNLNLGNFIRAGEEIEETIKIPNSGQIIEITSTYIRLRISRPYLISARAIIRVLTGDLVQSGESLALLVFERAKTGDIIQGLPRIEELLEARKPKDNCVLSTHPGFTQLYYSETIELKIKSLDKINTLLELQPGVFPTVTNNQFIEAGAPLSEGDISVHEILEIFFNLYFKNRVNCLSLADAIHLSLQKIQQFLVSEVQSVYQSQGIDISDKHIEIIIKQMTNKVKIEEGGDTTLLPNELIEFQQIEKMNEKFSTSNGQLASYTPILLGITKSSLNTQSFISAASFQETTRVLAKAAVEGKIDQLRGLKENVIIGNLIPAGTGFSAYNDNAVFQNEDIESIEVKTSVLNSPAESDTNSDLDDIILNKD.

Zn(2+) is bound by residues Cys-223, Cys-297, Cys-304, and Cys-307.

It belongs to the RNA polymerase beta' chain family. RpoC2 subfamily. In plastids the minimal PEP RNA polymerase catalytic core is composed of four subunits: alpha, beta, beta', and beta''. When a (nuclear-encoded) sigma factor is associated with the core the holoenzyme is formed, which can initiate transcription. Zn(2+) is required as a cofactor.

Its subcellular location is the plastid. The protein localises to the cyanelle. It carries out the reaction RNA(n) + a ribonucleoside 5'-triphosphate = RNA(n+1) + diphosphate. DNA-dependent RNA polymerase catalyzes the transcription of DNA into RNA using the four ribonucleoside triphosphates as substrates. The sequence is that of DNA-directed RNA polymerase subunit beta'' from Cyanophora paradoxa.